The sequence spans 167 residues: Probable chemoreceptor glutamine deamidase CheD (167 aa).

It belongs to the CheD family.

It carries out the reaction L-glutaminyl-[protein] + H2O = L-glutamyl-[protein] + NH4(+). Probably deamidates glutamine residues to glutamate on methyl-accepting chemotaxis receptors (MCPs), playing an important role in chemotaxis. The polypeptide is Probable chemoreceptor glutamine deamidase CheD (Moorella thermoacetica (strain ATCC 39073 / JCM 9320)).